The primary structure comprises 330 residues: Putative 4-hydroxythreonine-4-phosphate dehydrogenase (330 aa).

The a divalent metal cation site is built by H169, H213, and H263.

It belongs to the PdxA family. As to quaternary structure, homodimer. Zn(2+) is required as a cofactor. It depends on Mg(2+) as a cofactor. The cofactor is Co(2+).

The protein localises to the cytoplasm. The enzyme catalyses 4-(phosphooxy)-L-threonine + NAD(+) = 3-amino-2-oxopropyl phosphate + CO2 + NADH. The protein operates within cofactor biosynthesis; pyridoxine 5'-phosphate biosynthesis; pyridoxine 5'-phosphate from D-erythrose 4-phosphate: step 4/5. Its function is as follows. Catalyzes the NAD(P)-dependent oxidation of 4-(phosphooxy)-L-threonine (HTP) into 2-amino-3-oxo-4-(phosphooxy)butyric acid which spontaneously decarboxylates to form 3-amino-2-oxopropyl phosphate (AHAP). The sequence is that of Putative 4-hydroxythreonine-4-phosphate dehydrogenase from Novosphingobium aromaticivorans (Sphingomonas aromaticivorans).